Here is a 423-residue protein sequence, read N- to C-terminus: Type II methyltransferase M.BamHI (423 aa).

Basic and acidic residues predominate over residues 397–414 (DFRQDHEGNSKGDKKNEN). A disordered region spans residues 397-423 (DFRQDHEGNSKGDKKNENNDQISLSLE).

It belongs to the N(4)/N(6)-methyltransferase family.

The enzyme catalyses a 2'-deoxycytidine in DNA + S-adenosyl-L-methionine = an N(4)-methyl-2'-deoxycytidine in DNA + S-adenosyl-L-homocysteine + H(+). Its function is as follows. A beta subtype methylase, recognizes the double-stranded sequence 5'-GGATCC-3', methylates C-5 on both strands, and protects the DNA from cleavage by the BamHI endonuclease. In Bacillus amyloliquefaciens (Bacillus velezensis), this protein is Type II methyltransferase M.BamHI.